Here is a 264-residue protein sequence, read N- to C-terminus: Thymidylate synthase (264 aa).

Residues arginine 21 and 126-127 (RR) contribute to the dUMP site. Cysteine 146 functions as the Nucleophile in the catalytic mechanism. DUMP contacts are provided by residues 166 to 169 (RSAD), asparagine 177, and 207 to 209 (HLY). Position 169 (aspartate 169) interacts with (6R)-5,10-methylene-5,6,7,8-tetrahydrofolate. Alanine 263 is a binding site for (6R)-5,10-methylene-5,6,7,8-tetrahydrofolate.

This sequence belongs to the thymidylate synthase family. Bacterial-type ThyA subfamily. In terms of assembly, homodimer.

The protein resides in the cytoplasm. The enzyme catalyses dUMP + (6R)-5,10-methylene-5,6,7,8-tetrahydrofolate = 7,8-dihydrofolate + dTMP. It participates in pyrimidine metabolism; dTTP biosynthesis. Functionally, catalyzes the reductive methylation of 2'-deoxyuridine-5'-monophosphate (dUMP) to 2'-deoxythymidine-5'-monophosphate (dTMP) while utilizing 5,10-methylenetetrahydrofolate (mTHF) as the methyl donor and reductant in the reaction, yielding dihydrofolate (DHF) as a by-product. This enzymatic reaction provides an intracellular de novo source of dTMP, an essential precursor for DNA biosynthesis. This Afipia carboxidovorans (strain ATCC 49405 / DSM 1227 / KCTC 32145 / OM5) (Oligotropha carboxidovorans) protein is Thymidylate synthase.